A 385-amino-acid chain; its full sequence is Serpin-Z10 (385 aa).

Residues 333-357 (GTEAAAVSVGVVSCTSFRRNPDFVA) are RCL.

Belongs to the serpin family.

Probable serine protease inhibitor. The protein is Serpin-Z10 of Arabidopsis thaliana (Mouse-ear cress).